A 120-amino-acid polypeptide reads, in one-letter code: Large ribosomal subunit protein uL18 (120 aa).

Belongs to the universal ribosomal protein uL18 family. In terms of assembly, part of the 50S ribosomal subunit; part of the 5S rRNA/L5/L18/L25 subcomplex. Contacts the 5S and 23S rRNAs.

Functionally, this is one of the proteins that bind and probably mediate the attachment of the 5S RNA into the large ribosomal subunit, where it forms part of the central protuberance. The sequence is that of Large ribosomal subunit protein uL18 from Lawsonia intracellularis (strain PHE/MN1-00).